We begin with the raw amino-acid sequence, 95 residues long: HssA/B-like protein 45 (95 aa).

The disordered stretch occupies residues 1–31 (MTLFSSISSISNPMTSSKSSIASFGSGTSMS).

The protein belongs to the hssA/B family.

This Dictyostelium discoideum (Social amoeba) protein is HssA/B-like protein 45 (hssl45).